Here is a 128-residue protein sequence, read N- to C-terminus: RYamide neuropeptides (128 aa).

An N-terminal signal peptide occupies residues 1-23 (MHARKLIVVLVYILTVLVSVAVS). The propeptide occupies 26-29 (YTSE). Tyr-44 carries the tyrosine amide modification. A propeptide spanning residues 47–63 (GGPSPNNKENKVNIRPR) is cleaved from the precursor. Tyr-73 is subject to Tyrosine amide. Positions 77–128 (SGWSPNASLVYPVSTPLCGLDEDLSCAYTGISDLYRCTPRKGESEEFTTSSN) are excised as a propeptide.

It localises to the secreted. In terms of biological role, neuropeptides RYamide-1 and RYamide-2 are ligands for the G-protein coupled receptor RYa-R. RYamide-2 is the most potent activator of RYa-R. This Tribolium castaneum (Red flour beetle) protein is RYamide neuropeptides.